The primary structure comprises 323 residues: Beta-ketoacyl-[acyl-carrier-protein] synthase III (323 aa).

Catalysis depends on residues Cys-114 and His-250. The segment at 251–255 (QANKR) is ACP-binding. Asn-280 is a catalytic residue.

It belongs to the thiolase-like superfamily. FabH family. Homodimer.

The protein localises to the cytoplasm. The catalysed reaction is malonyl-[ACP] + acetyl-CoA + H(+) = 3-oxobutanoyl-[ACP] + CO2 + CoA. It participates in lipid metabolism; fatty acid biosynthesis. Catalyzes the condensation reaction of fatty acid synthesis by the addition to an acyl acceptor of two carbons from malonyl-ACP. Catalyzes the first condensation reaction which initiates fatty acid synthesis and may therefore play a role in governing the total rate of fatty acid production. Possesses both acetoacetyl-ACP synthase and acetyl transacylase activities. Its substrate specificity determines the biosynthesis of branched-chain and/or straight-chain of fatty acids. This chain is Beta-ketoacyl-[acyl-carrier-protein] synthase III, found in Hyphomonas neptunium (strain ATCC 15444).